The chain runs to 233 residues: NAD(P)H-hydrate epimerase (233 aa).

Residues 10–217 (AINVDLELFN…ALQRKYELNL (208 aa)) form the YjeF N-terminal domain. 60 to 64 (NNGGD) is a binding site for (6S)-NADPHX. K(+)-binding residues include Asn61 and Asp125. Residues 129–135 (GFSFKPP) and Asp158 contribute to the (6S)-NADPHX site. Ser161 contacts K(+).

It belongs to the NnrE/AIBP family. It depends on K(+) as a cofactor.

The catalysed reaction is (6R)-NADHX = (6S)-NADHX. The enzyme catalyses (6R)-NADPHX = (6S)-NADPHX. In terms of biological role, catalyzes the epimerization of the S- and R-forms of NAD(P)HX, a damaged form of NAD(P)H that is a result of enzymatic or heat-dependent hydration. This is a prerequisite for the S-specific NAD(P)H-hydrate dehydratase to allow the repair of both epimers of NAD(P)HX. The protein is NAD(P)H-hydrate epimerase of Drosophila grimshawi (Hawaiian fruit fly).